Here is a 449-residue protein sequence, read N- to C-terminus: MYHIWIKFLAAWIFLKRFNGVHVMQAKAPMYRNEPFLVFWNAPTTQCRLRYKVDLDLKTFHIVSNANDSLSGSAVTIFYPNHLGVYPHIDDRGHFFHGIIPQNESLTKHLNKSKSDINRIIPLKAFHGLGVIDWENWRPQWDRNWGSKNVYRNRSIQFARDLHPELSEDKIRRLAKKEYEKAAKSFMRDTLLLAEEMRPDGYWGYYLYPDCQNYDYKTKGDQYTGKCPEIEMSRNDQLLWLWRDSTALFPNVYLEIILRSSDNALKFVHHRLKEAMRIASMAREDYALPVFAYARPFYAYTFEPLTQEDLVTTVGETAAMGAAGIVFWGSMQYASTVDSCQKVKKYMNGPLGRYIVNVTTAAKICSRVLCRKNGRCVRKHSDSNAFLHLFPESFRIMVYANATEKKVIVKGKLELENLIYLRENFMCQCYQGWKGLYCEEYSIKDIRKI.

The N-terminal stretch at 1–23 is a signal peptide; it reads MYHIWIKFLAAWIFLKRFNGVHV. Cystine bridges form between Cys47–Cys340 and Cys211–Cys227. N-linked (GlcNAc...) asparagine glycans are attached at residues Asn67, Asn103, and Asn111. Glu135 (proton donor) is an active-site residue. Residue Asn153 is glycosylated (N-linked (GlcNAc...) asparagine). An N-linked (GlcNAc...) asparagine glycan is attached at Asn357. 3 disulfides stabilise this stretch: Cys365/Cys376, Cys370/Cys427, and Cys429/Cys438. A glycan (N-linked (GlcNAc...) asparagine) is linked at Asn401. Positions 427-438 constitute an EGF-like domain; that stretch reads CQCYQGWKGLYC.

Belongs to the glycosyl hydrolase 56 family. Monomer. In terms of tissue distribution, expressed by the venom gland.

It localises to the secreted. The enzyme catalyses Random hydrolysis of (1-&gt;4)-linkages between N-acetyl-beta-D-glucosamine and D-glucuronate residues in hyaluronate.. Functionally, snake venom endo-hyaluronidase that degrades hyaluronan to smaller oligosaccharide fragments. In venom, it is not toxic by itself, but increases the diffusion of other venom proteins by degrading the extracellular matrix. In addition, it displays antiedematogenic activity. This Cerastes cerastes (Horned desert viper) protein is Hyaluronidase-1.